A 373-amino-acid chain; its full sequence is Anhydro-N-acetylmuramic acid kinase (373 aa).

13–20 (GTSMDGID) provides a ligand contact to ATP.

This sequence belongs to the anhydro-N-acetylmuramic acid kinase family.

It carries out the reaction 1,6-anhydro-N-acetyl-beta-muramate + ATP + H2O = N-acetyl-D-muramate 6-phosphate + ADP + H(+). The protein operates within amino-sugar metabolism; 1,6-anhydro-N-acetylmuramate degradation. Its pathway is cell wall biogenesis; peptidoglycan recycling. Its function is as follows. Catalyzes the specific phosphorylation of 1,6-anhydro-N-acetylmuramic acid (anhMurNAc) with the simultaneous cleavage of the 1,6-anhydro ring, generating MurNAc-6-P. Is required for the utilization of anhMurNAc either imported from the medium or derived from its own cell wall murein, and thus plays a role in cell wall recycling. In Brucella abortus (strain 2308), this protein is Anhydro-N-acetylmuramic acid kinase.